The chain runs to 279 residues: Ribonuclease T2 protein rnst-2 (279 aa).

Positions 1-17 (MKLLLLLCISCIPLAYS) are cleaved as a signal peptide. An intrachain disulfide couples Cys37 to Cys48. His60 is an active-site residue. N-linked (GlcNAc...) asparagine glycosylation is present at Asn68. Residues Glu114 and His118 contribute to the active site. A disulfide bond links Cys200 and Cys210.

The protein belongs to the RNase T2 family. Expressed in the pharynx, hypodermis, muscle cells, sheath cells, intestinal cells, the vulva and tail regions.

The protein localises to the lysosome. The enzyme catalyses a ribonucleotidyl-ribonucleotide-RNA + H2O = a 3'-end 3'-phospho-ribonucleotide-RNA + a 5'-end dephospho-ribonucleoside-RNA + H(+). Functionally, probable endoribonuclease involved in the autophagy-mediated degradation of ribosomal RNA and ribosomal proteins in lysosomes. The sequence is that of Ribonuclease T2 protein rnst-2 from Caenorhabditis elegans.